The primary structure comprises 240 residues: LexA repressor (240 aa).

The H-T-H motif DNA-binding region spans 26–46 (FDEMKEALDLASKSGIHRLIT). Residues serine 161 and lysine 199 each act as for autocatalytic cleavage activity in the active site.

This sequence belongs to the peptidase S24 family. In terms of assembly, homodimer.

It catalyses the reaction Hydrolysis of Ala-|-Gly bond in repressor LexA.. Its function is as follows. Represses a number of genes involved in the response to DNA damage (SOS response), including recA and lexA. In the presence of single-stranded DNA, RecA interacts with LexA causing an autocatalytic cleavage which disrupts the DNA-binding part of LexA, leading to derepression of the SOS regulon and eventually DNA repair. In Brucella ovis (strain ATCC 25840 / 63/290 / NCTC 10512), this protein is LexA repressor.